The primary structure comprises 170 residues: Ribosome maturation factor RimM (170 aa).

The PRC barrel domain occupies 92–163 (KEGWYYFELE…RMDVELPPGL (72 aa)).

The protein belongs to the RimM family. Binds ribosomal protein uS19.

It is found in the cytoplasm. In terms of biological role, an accessory protein needed during the final step in the assembly of 30S ribosomal subunit, possibly for assembly of the head region. Essential for efficient processing of 16S rRNA. May be needed both before and after RbfA during the maturation of 16S rRNA. It has affinity for free ribosomal 30S subunits but not for 70S ribosomes. This chain is Ribosome maturation factor RimM, found in Desulfitobacterium hafniense (strain Y51).